Reading from the N-terminus, the 126-residue chain is Holo-[acyl-carrier-protein] synthase (126 aa).

2 residues coordinate Mg(2+): Asp-9 and Glu-58.

The protein belongs to the P-Pant transferase superfamily. AcpS family. It depends on Mg(2+) as a cofactor.

It localises to the cytoplasm. It carries out the reaction apo-[ACP] + CoA = holo-[ACP] + adenosine 3',5'-bisphosphate + H(+). Transfers the 4'-phosphopantetheine moiety from coenzyme A to a Ser of acyl-carrier-protein. The polypeptide is Holo-[acyl-carrier-protein] synthase (Buchnera aphidicola subsp. Acyrthosiphon pisum (strain APS) (Acyrthosiphon pisum symbiotic bacterium)).